The sequence spans 366 residues: UDP-N-acetylglucosamine--N-acetylmuramyl-(pentapeptide) pyrophosphoryl-undecaprenol N-acetylglucosamine transferase (366 aa).

UDP-N-acetyl-alpha-D-glucosamine is bound by residues 17–19, Asn-129, Arg-169, Ser-195, Ile-251, 270–275, and Gln-296; these read TGG and ALTVSE.

It belongs to the glycosyltransferase 28 family. MurG subfamily.

It is found in the cell inner membrane. The catalysed reaction is di-trans,octa-cis-undecaprenyl diphospho-N-acetyl-alpha-D-muramoyl-L-alanyl-D-glutamyl-meso-2,6-diaminopimeloyl-D-alanyl-D-alanine + UDP-N-acetyl-alpha-D-glucosamine = di-trans,octa-cis-undecaprenyl diphospho-[N-acetyl-alpha-D-glucosaminyl-(1-&gt;4)]-N-acetyl-alpha-D-muramoyl-L-alanyl-D-glutamyl-meso-2,6-diaminopimeloyl-D-alanyl-D-alanine + UDP + H(+). The protein operates within cell wall biogenesis; peptidoglycan biosynthesis. In terms of biological role, cell wall formation. Catalyzes the transfer of a GlcNAc subunit on undecaprenyl-pyrophosphoryl-MurNAc-pentapeptide (lipid intermediate I) to form undecaprenyl-pyrophosphoryl-MurNAc-(pentapeptide)GlcNAc (lipid intermediate II). The chain is UDP-N-acetylglucosamine--N-acetylmuramyl-(pentapeptide) pyrophosphoryl-undecaprenol N-acetylglucosamine transferase from Shewanella denitrificans (strain OS217 / ATCC BAA-1090 / DSM 15013).